A 718-amino-acid polypeptide reads, in one-letter code: Polyphosphate kinase (718 aa).

Asn47 contributes to the ATP binding site. The Mg(2+) site is built by Arg372 and Arg402. His432 (phosphohistidine intermediate) is an active-site residue. ATP-binding residues include Tyr465, Arg561, and His589. Residues 683–718 are disordered; it reads KADHGDTTPTSNAHQFIPMMSPKNEPDASDLDREDD. A compositionally biased stretch (acidic residues) spans 709–718; sequence DASDLDREDD.

This sequence belongs to the polyphosphate kinase 1 (PPK1) family. Requires Mg(2+) as cofactor. An intermediate of this reaction is the autophosphorylated ppk in which a phosphate is covalently linked to a histidine residue through a N-P bond.

The enzyme catalyses [phosphate](n) + ATP = [phosphate](n+1) + ADP. Its function is as follows. Catalyzes the reversible transfer of the terminal phosphate of ATP to form a long-chain polyphosphate (polyP). This is Polyphosphate kinase from Lactiplantibacillus plantarum (strain ATCC BAA-793 / NCIMB 8826 / WCFS1) (Lactobacillus plantarum).